Here is a 532-residue protein sequence, read N- to C-terminus: Glucose-6-phosphate isomerase (532 aa).

Glutamate 322 (proton donor) is an active-site residue. Active-site residues include histidine 351 and lysine 457.

The protein belongs to the GPI family.

It is found in the cytoplasm. The catalysed reaction is alpha-D-glucose 6-phosphate = beta-D-fructose 6-phosphate. The protein operates within carbohydrate biosynthesis; gluconeogenesis. Its pathway is carbohydrate degradation; glycolysis; D-glyceraldehyde 3-phosphate and glycerone phosphate from D-glucose: step 2/4. In terms of biological role, catalyzes the reversible isomerization of glucose-6-phosphate to fructose-6-phosphate. This Synechococcus sp. (strain JA-3-3Ab) (Cyanobacteria bacterium Yellowstone A-Prime) protein is Glucose-6-phosphate isomerase.